The chain runs to 415 residues: Vascular endothelial growth factor C (415 aa).

The N-terminal stretch at 1-31 (MHLLCFLSLACSLLAAALIPGPREAPATVAA) is a signal peptide. Positions 32–107 (FESGLGFSEA…RTGDTVKLAA (76 aa)) are excised as a propeptide. 3 disulfides stabilise this stretch: Cys127/Cys169, Cys158/Cys205, and Cys162/Cys207. 3 N-linked (GlcNAc...) asparagine glycosylation sites follow: Asn171, Asn201, and Asn236. Positions 224–415 (SLPATLPQCQ…PSYWKRPHLN (192 aa)) are excised as a propeptide. Tandem repeats lie at residues 276–291 (CGPN…QCVC), 300–315 (CGPH…QCVC), 324–339 (CGAN…QCVC), and 343–358 (CPRN…ACEC). The interval 276–358 (CGPNKELDED…LNPGKCACEC (83 aa)) is 4 X 16 AA repeats of C-X(10)-C-X-C-X(1,3)-C.

This sequence belongs to the PDGF/VEGF growth factor family. Homodimer; non-covalent and antiparallel. Interacts with FLT4/VEGFR3; the interaction is required for FLT4/VEGFR3 homodimarization and activation. Post-translationally, undergoes a complex proteolytic maturation which generates a variety of processed secreted forms with increased activity toward VEGFR-3, but only the fully processed form could activate VEGFR-2. VEGF-C first form an antiparallel homodimer linked by disulfide bonds. Before secretion, a cleavage occurs between Arg-223 and Ser-224 producing a heterotetramer. The next extracellular step of the processing removes the N-terminal propeptide. Finally the mature VEGF-C is composed mostly of two VEGF homology domains (VHDs) bound by non-covalent interactions. As to expression, highly expressed in the lung, ovary, preputial gland and the adrenal gland. Expressed in the post-pubertal mammary glands.

The protein resides in the secreted. In terms of biological role, growth factor active in angiogenesis, and endothelial cell growth, stimulating their proliferation and migration and also has effects on the permeability of blood vessels. May function in angiogenesis of the venous and lymphatic vascular systems during embryogenesis, and also in the maintenance of differentiated lymphatic endothelium in adults. Binds and activates KDR/VEGFR2 and FLT4/VEGFR3 receptors. In Rattus norvegicus (Rat), this protein is Vascular endothelial growth factor C (Vegfc).